Here is a 410-residue protein sequence, read N- to C-terminus: Platelet-activating factor acetylhydrolase IB subunit alpha (410 aa).

Positions 1–38 (MVLSQRQRDELNRAIADYLRSNGYEEAYSVFKKEAELD) are required for self-association and interaction with PAFAH1B2 and PAFAH1B3. Residues 1–66 (MVLSQRQRDE…SVIRLQKKVM (66 aa)) are interaction with NDE1. The interval 1–102 (MVLSQRQRDE…EWIPRPPEKY (102 aa)) is interaction with NDEL1. Residues 7 to 39 (QRDELNRAIADYLRSNGYEEAYSVFKKEAELDM) form the LisH domain. N6-acetyllysine is present on K53. A coiled-coil region spans residues 56-82 (TSVIRLQKKVMELESKLNEAKEEFTSG). Residues 83 to 410 (GPLGQKRDPK…DQTVKVWECR (328 aa)) are interaction with dynein and dynactin. WD repeat units lie at residues 106 to 147 (GHRS…RTLK), 148 to 187 (GHTDSVQDISFDHSGKLLASCSADMTIKLWDFQGFECIRT), 190 to 229 (GHDHNVSSVAIMPNGDHIVSASRDKTIKMWEVQTGYCVKT), 232 to 271 (GHREWVRMVRPNQDGTLIASCSNDQTVRVWVVATKECKAE), 274 to 333 (EHEH…CLMT), 336 to 377 (GHDN…KTLN), and 379 to 410 (HEHFVTSLDFHKTAPYVVTGFVDQTVKVWECR). Position 109 is a phosphoserine (S109). Positions 367–409 (YKNKRCMKTLNAHEHFVTSLDFHKTAPYVVTGFVDQTVKVWEC) are interaction with DCX. Residues 388 to 410 (FHKTAPYVVTGFVDQTVKVWECR) are interaction with NDEL1.

This sequence belongs to the WD repeat LIS1/nudF family. As to quaternary structure, can self-associate. Component of the cytosolic PAF-AH (I) heterotetrameric enzyme, which is composed of PAFAH1B1 (beta), PAFAH1B2 (alpha2) and PAFAH1B3 (alpha1) subunits. The catalytic activity of the enzyme resides in the alpha1 (PAFAH1B3) and alpha2 (PAFAH1B2) subunits, whereas the beta subunit (PAFAH1B1) has regulatory activity. Trimer formation is not essential for the catalytic activity. Interacts with the catalytic dimer of PAF-AH (I) heterotetrameric enzyme: interacts with PAFAH1B2 homodimer (alpha2/alpha2 homodimer), PAFAH1B3 homodimer (alpha1/alpha1 homodimer) and PAFAH1B2-PAFAH1B3 heterodimer (alpha2/alpha1 heterodimer). Interacts with DCX, dynein, dynactin, IQGAP1, KATNB1, NDE1, NDEL1, NUDC and RSN. Interacts with DISC1, and this interaction is enhanced by NDEL1. Interacts with DAB1 when DAB1 is phosphorylated in response to RELN/reelin signaling. Interacts with INTS13. Interacts with DCDC1.

The protein resides in the cytoplasm. It is found in the cytoskeleton. It localises to the microtubule organizing center. Its subcellular location is the centrosome. The protein localises to the spindle. The protein resides in the nucleus membrane. Regulatory subunit (beta subunit) of the cytosolic type I platelet-activating factor (PAF) acetylhydrolase (PAF-AH (I)), an enzyme that catalyzes the hydrolyze of the acetyl group at the sn-2 position of PAF and its analogs and participates in PAF inactivation. Regulates the PAF-AH (I) activity in a catalytic dimer composition-dependent manner. Positively regulates the activity of the minus-end directed microtubule motor protein dynein. May enhance dynein-mediated microtubule sliding by targeting dynein to the microtubule plus end. Required for several dynein- and microtubule-dependent processes such as the maintenance of Golgi integrity, the peripheral transport of microtubule fragments and the coupling of the nucleus and centrosome. Required during brain development for the proliferation of neuronal precursors and the migration of newly formed neurons from the ventricular/subventricular zone toward the cortical plate. Neuronal migration involves a process called nucleokinesis, whereby migrating cells extend an anterior process into which the nucleus subsequently translocates. During nucleokinesis dynein at the nuclear surface may translocate the nucleus towards the centrosome by exerting force on centrosomal microtubules. Also required for proper activation of Rho GTPases and actin polymerization at the leading edge of locomoting cerebellar neurons and postmigratory hippocampal neurons in response to calcium influx triggered via NMDA receptors. May also play a role in other forms of cell locomotion including the migration of fibroblasts during wound healing. Required for dynein recruitment to microtubule plus ends and BICD2-bound cargos. May modulate the Reelin pathway through interaction of the PAF-AH (I) catalytic dimer with VLDLR. This is Platelet-activating factor acetylhydrolase IB subunit alpha from Pan troglodytes (Chimpanzee).